Here is a 287-residue protein sequence, read N- to C-terminus: rRNA adenine N-6-methyltransferase (287 aa).

The span at 1–13 shows a compositional bias: basic residues; that stretch reads MKKKNHKYRGKKL. The interval 1–21 is disordered; sequence MKKKNHKYRGKKLNRGESPNF. Residues His-25, Met-27, Gly-52, Glu-73, Asp-98, and Asn-114 each contribute to the S-adenosyl-L-methionine site.

This sequence belongs to the class I-like SAM-binding methyltransferase superfamily. rRNA adenine N(6)-methyltransferase family.

Functionally, involved in erythromycin resistance. This is rRNA adenine N-6-methyltransferase (ermD) from Bacillus licheniformis.